A 207-amino-acid chain; its full sequence is LexA repressor (207 aa).

The H-T-H motif DNA-binding region spans valine 28–alanine 48. Catalysis depends on for autocatalytic cleavage activity residues serine 129 and lysine 167.

Belongs to the peptidase S24 family. In terms of assembly, homodimer.

It carries out the reaction Hydrolysis of Ala-|-Gly bond in repressor LexA.. Its function is as follows. Represses a number of genes involved in the response to DNA damage (SOS response), including recA and lexA. In the presence of single-stranded DNA, RecA interacts with LexA causing an autocatalytic cleavage which disrupts the DNA-binding part of LexA, leading to derepression of the SOS regulon and eventually DNA repair. This Geobacillus thermodenitrificans (strain NG80-2) protein is LexA repressor.